A 1414-amino-acid chain; its full sequence is Phenyloxazoline synthase MbtB (1414 aa).

The 74-residue stretch at 5 to 78 (TACSEIIRAE…AWSQLVSAGT (74 aa)) folds into the Carrier 1 domain. S39 carries the post-translational modification O-(pantetheine 4'-phosphoryl)serine. Residues 96-394 (EGEPFPLAPM…SSLLLDVDLT (299 aa)) form a condensation/cyclization region. The tract at residues 579–975 (SYAQLRDQAS…RLPGVHAAAA (397 aa)) is adenylation. The Carrier 2 domain occupies 1057–1135 (APRTVLQRAL…ALAQLLTGRE (79 aa)). S1094 carries the O-(pantetheine 4'-phosphoryl)serine modification. Residues 1188–1413 (GAVLVFPHAG…AVARMVSADV (226 aa)) form a thioesterase region.

This sequence belongs to the ATP-dependent AMP-binding enzyme family. MbtB subfamily. Requires pantetheine 4'-phosphate as cofactor. Post-translationally, 4'-phosphopantetheine is transferred from CoA to a specific serine in each of the two carrier protein domains, leading to their activation from apo to holo forms.

It participates in siderophore biosynthesis; mycobactin biosynthesis. Functionally, involved in the initial steps of the mycobactin biosynthetic pathway. Putatively couples activated salicylic acid with serine or threonine and cyclizes this precursor to the hydroxyphenyloxazoline ring system present in this class of siderophores. Essential for growth in macrophages. The protein is Phenyloxazoline synthase MbtB (mbtB) of Mycobacterium tuberculosis (strain ATCC 25618 / H37Rv).